A 300-amino-acid polypeptide reads, in one-letter code: Auxin-responsive protein IAA7 (300 aa).

Disordered stretches follow at residues 1-80 (MGEA…DGDK) and 92-125 (VSHS…LASN). Residues 43–47 (LSLGL) carry the EAR-like (transcriptional repression) motif. The span at 92–103 (VSHSQGKANKNK) shows a compositional bias: polar residues. In terms of domain architecture, PB1 spans 177–281 (APFIKINMDG…SVKRLRVLKT (105 aa)).

It belongs to the Aux/IAA family. Homodimers and heterodimers. Expressed at low levels in roots and shoots.

It localises to the nucleus. Functionally, aux/IAA proteins are short-lived transcriptional factors that function as repressors of early auxin response genes at low auxin concentrations. This chain is Auxin-responsive protein IAA7 (IAA7), found in Oryza sativa subsp. japonica (Rice).